Consider the following 892-residue polypeptide: Alanine--tRNA ligase (892 aa).

His-574, His-578, Cys-676, and His-680 together coordinate Zn(2+).

The protein belongs to the class-II aminoacyl-tRNA synthetase family. Zn(2+) is required as a cofactor.

The protein resides in the cytoplasm. It catalyses the reaction tRNA(Ala) + L-alanine + ATP = L-alanyl-tRNA(Ala) + AMP + diphosphate. Catalyzes the attachment of alanine to tRNA(Ala) in a two-step reaction: alanine is first activated by ATP to form Ala-AMP and then transferred to the acceptor end of tRNA(Ala). Also edits incorrectly charged Ser-tRNA(Ala) and Gly-tRNA(Ala) via its editing domain. This chain is Alanine--tRNA ligase, found in Prochlorococcus marinus (strain SARG / CCMP1375 / SS120).